Reading from the N-terminus, the 491-residue chain is Aspartyl/glutamyl-tRNA(Asn/Gln) amidotransferase subunit B (491 aa).

It belongs to the GatB/GatE family. GatB subfamily. As to quaternary structure, heterotrimer of A, B and C subunits.

It carries out the reaction L-glutamyl-tRNA(Gln) + L-glutamine + ATP + H2O = L-glutaminyl-tRNA(Gln) + L-glutamate + ADP + phosphate + H(+). The catalysed reaction is L-aspartyl-tRNA(Asn) + L-glutamine + ATP + H2O = L-asparaginyl-tRNA(Asn) + L-glutamate + ADP + phosphate + 2 H(+). In terms of biological role, allows the formation of correctly charged Asn-tRNA(Asn) or Gln-tRNA(Gln) through the transamidation of misacylated Asp-tRNA(Asn) or Glu-tRNA(Gln) in organisms which lack either or both of asparaginyl-tRNA or glutaminyl-tRNA synthetases. The reaction takes place in the presence of glutamine and ATP through an activated phospho-Asp-tRNA(Asn) or phospho-Glu-tRNA(Gln). The chain is Aspartyl/glutamyl-tRNA(Asn/Gln) amidotransferase subunit B from Nostoc punctiforme (strain ATCC 29133 / PCC 73102).